Here is a 117-residue protein sequence, read N- to C-terminus: MKFFWVSSLLGLLGLSTAIPLSTEADALLDRKTIYFGMKAYDDVNCKGSTSYTISFNKCQAYPNINSINALTDGAVCTVYVYSSNNCTGEPVFQTDSDGIECINVDAFETGSWKFKC.

The signal sequence occupies residues 1–18; the sequence is MKFFWVSSLLGLLGLSTA. A glycan (N-linked (GlcNAc...) asparagine) is linked at asparagine 86.

This is an uncharacterized protein from Schizosaccharomyces pombe (strain 972 / ATCC 24843) (Fission yeast).